A 458-amino-acid polypeptide reads, in one-letter code: Phosphoglucosamine mutase (458 aa).

The active-site Phosphoserine intermediate is Ser-100. 4 residues coordinate Mg(2+): Ser-100, Asp-239, Asp-241, and Asp-243. Residue Ser-100 is modified to Phosphoserine.

The protein belongs to the phosphohexose mutase family. Mg(2+) serves as cofactor. In terms of processing, activated by phosphorylation.

It catalyses the reaction alpha-D-glucosamine 1-phosphate = D-glucosamine 6-phosphate. In terms of biological role, catalyzes the conversion of glucosamine-6-phosphate to glucosamine-1-phosphate. The polypeptide is Phosphoglucosamine mutase (Dictyoglomus thermophilum (strain ATCC 35947 / DSM 3960 / H-6-12)).